Consider the following 399-residue polypeptide: Phosphoglycerate kinase (399 aa).

Substrate is bound by residues 21-23 (DFN), Arg36, 59-62 (HLGR), Arg120, and Arg158. ATP contacts are provided by residues Lys209, Gly297, Glu328, and 355–358 (GGDS).

Belongs to the phosphoglycerate kinase family. As to quaternary structure, monomer.

It localises to the cytoplasm. It catalyses the reaction (2R)-3-phosphoglycerate + ATP = (2R)-3-phospho-glyceroyl phosphate + ADP. Its pathway is carbohydrate degradation; glycolysis; pyruvate from D-glyceraldehyde 3-phosphate: step 2/5. This Streptococcus thermophilus (strain ATCC BAA-491 / LMD-9) protein is Phosphoglycerate kinase.